The chain runs to 454 residues: Chromosomal replication initiator protein DnaA (454 aa).

Positions 1-74 (MFDLDKFWQF…IQEAYAYADM (74 aa)) are domain I, interacts with DnaA modulators. A domain II region spans residues 74-116 (MEIQPKFEVAGKEGPERLVTPQPRIKTNQEILENRRDEFAQDL). The interval 117–333 (QLNSKYTFDT…GALVKVQAHA (217 aa)) is domain III, AAA+ region. Glycine 161, glycine 163, lysine 164, and threonine 165 together coordinate ATP. Residues 334–454 (TIEREDINVD…VYDLKAMLEH (121 aa)) are domain IV, binds dsDNA.

Belongs to the DnaA family. As to quaternary structure, oligomerizes as a right-handed, spiral filament on DNA at oriC.

It localises to the cytoplasm. In terms of biological role, plays an essential role in the initiation and regulation of chromosomal replication. ATP-DnaA binds to the origin of replication (oriC) to initiate formation of the DNA replication initiation complex once per cell cycle. Binds the DnaA box (a 9 base pair repeat at the origin) and separates the double-stranded (ds)DNA. Forms a right-handed helical filament on oriC DNA; dsDNA binds to the exterior of the filament while single-stranded (ss)DNA is stabiized in the filament's interior. The ATP-DnaA-oriC complex binds and stabilizes one strand of the AT-rich DNA unwinding element (DUE), permitting loading of DNA polymerase. After initiation quickly degrades to an ADP-DnaA complex that is not apt for DNA replication. Binds acidic phospholipids. The polypeptide is Chromosomal replication initiator protein DnaA (Lactobacillus johnsonii (strain CNCM I-12250 / La1 / NCC 533)).